The primary structure comprises 161 residues: Nucleotide-binding protein RSc2549 (161 aa).

This sequence belongs to the YajQ family.

Functionally, nucleotide-binding protein. This chain is Nucleotide-binding protein RSc2549, found in Ralstonia nicotianae (strain ATCC BAA-1114 / GMI1000) (Ralstonia solanacearum).